Consider the following 165-residue polypeptide: Large ribosomal subunit protein uL10 (165 aa).

Belongs to the universal ribosomal protein uL10 family. As to quaternary structure, part of the ribosomal stalk of the 50S ribosomal subunit. The N-terminus interacts with L11 and the large rRNA to form the base of the stalk. The C-terminus forms an elongated spine to which L12 dimers bind in a sequential fashion forming a multimeric L10(L12)X complex.

Forms part of the ribosomal stalk, playing a central role in the interaction of the ribosome with GTP-bound translation factors. In Yersinia pseudotuberculosis serotype IB (strain PB1/+), this protein is Large ribosomal subunit protein uL10.